We begin with the raw amino-acid sequence, 1134 residues long: MGIWKWLVMASLVWPVLTLRNVYDMKIECPHTVSFGENSVIGYVELPPMPLADTAQLVPESSCSMDNHQSLNTITKYTQVSWRGKADQSQSSQNSFETVSTEVDLKGTCVLKHKMVEESYRSRKSITCYDLSCNSTYCKPTLYMIVPIHACNMMKSCLIALGPYRVQVVYERTYCMTGVLIEGKCFVPDQSVVSIIKHGIFDIASVHIVCFFVAVKGNTYKIFEQVKKSFESTCNDTENKVQGYYICIVGGNSAPIYVPTLDDFRSMEAFTGIFRSPHGEDHDLAGEETATYSIVGPANAKVPHSASSDTLSLIAFSGIPSYSSLSILTSSTEAKHVFSPGLFPKLNHTNCDKGAIPLMWTGMIDVPRYYDGIHPFTVFCVLSGPGASCEAFSEGGIFNITSPMCLVSKQNRFRLTEQQVNFVCQRVDVDIVVYCNGQRKVILTKTLVIGQCIYTITSLFSLLPGVAHSIAVELCVPGFHGWATAALLVTFCFGWVLIPAVTFIILAILKFIANIFHTSNQENRLKSVLRKIKEEFEKTKGSMVCDVCKYECETYKELKAHGVSCPQSQCPYCFTHCEPTEAAFQAHYKVCQVTHRFRDDLKKTVTPQNFTPGCYRTLNLFRYKSRCYIFTMWIFLLVLESILWAASASETPLTPVWNDNAHGVGSIPMHTDLELDFSLTSSSKYTYRRKLTNPLEAQSIDLHIEIEEQTIGVDVHALGHWFDGRLNLKTSFHCYGACTKYEYPWHTAKCHYERDYQYETSWGCNPSDCPGCGTGCTACGLYLDRLKPVGSAYKIITIRYSRRVCVQFGEENLCKIIDMNDCFVSRHVKVCIIGTVSKFSQGDTLLFFGPLEGGGLIFKHWRTSTCQFGDPGDIMSPRDKGFLCPEFPGSFRKKCNFATTPICEYDGNMVSGYKKVMATIDSFQSFNTSTMHFTDERIEWKDPDGMLRDHINILVTKDIDFDNLGENPCKIGLQTSSIEGAWGSGVGFTLTCLVSLTECPTFLTSIKACDKAICYGAESVTLTRGQNTVKVSGKGGHSGSTFKCCHGEDCSPNGLHAAAPHLDKVNGISEIENSKEYDDGAPQCGIKCWFVKSGEWISGIFSGNWIVLIVLCVFLLFSLVLLSILCPVRKHKKS.

A signal peptide spans Met1 to Thr18. Residues Leu19 to Leu487 are Lumenal-facing. 8 disulfides stabilise this stretch: Cys29/Cys151, Cys63/Cys157, Cys109/Cys128, Cys133/Cys138, Cys175/Cys185, Cys210/Cys247, Cys234/Cys351, and Cys380/Cys389. N-linked (GlcNAc...) asparagine; by host glycosylation occurs at Asn134. 2 N-linked (GlcNAc...) asparagine; by host glycosylation sites follow: Asn235 and Asn347. Asn399 carries N-linked (GlcNAc...) asparagine; by host glycosylation. 2 disulfides stabilise this stretch: Cys405/Cys424 and Cys452/Cys475. A helical transmembrane segment spans residues Leu488–Ile508. At Leu509–Cys627 the chain is on the cytoplasmic side. The tract at residues Phe516 to Lys533 is binding to the ribonucleoprotein. 2 consecutive CCHC-type zinc fingers follow at residues Cys545 to Cys565 and Cys570 to Cys591. 3 binding to the ribonucleoprotein regions span residues Tyr588 to Val605, Gln592 to Lys603, and Thr611 to Ser625. In terms of domain architecture, ITAM spans Thr611–Ile634. The short motif at Tyr615–Leu618 is the YxxL element. Residues Tyr628–Ala648 traverse the membrane as a helical segment. Topologically, residues Ser649 to Asn1104 are lumenal. 7 disulfides stabilise this stretch: Cys734/Cys769, Cys738/Cys776, Cys750/Cys884, Cys764/Cys895, Cys779/Cys903, Cys805/Cys814, and Cys822/Cys831. A fusion loop region spans residues Tyr756–Cys776. N-linked (GlcNAc...) asparagine; by host glycosylation is present at Asn927. Cystine bridges form between Cys969–Cys999, Cys992–Cys1044, Cys1009–Cys1014, Cys1045–Cys1050, and Cys1084–Cys1088. Residues Trp1105–Leu1125 form a helical membrane-spanning segment. Residues Leu1121–Ser1134 are binding to the ribonucleoprotein. Residues Cys1126 to Ser1134 are Cytoplasmic-facing.

It belongs to the hantavirus envelope glycoprotein family. Homodimer. Homotetramer; forms heterotetrameric Gn-Gc spikes in the pre-fusion conformation. Interacts (via C-terminus) with the nucleoprotein. Interacts with host TUFM; this interaction contributes to the virus-induced degradation of mitochondria by autophagy, which leads to degradation of host MAVS and inhibition of type I interferon (IFN) responses. Interacts with host MAP1LC3B; this interaction contributes to the virus-induced degradation of mitochondria by autophagy, which leads to degradation of host MAVS and inhibition of type I interferon (IFN) responses. In terms of assembly, homodimer. Homotetramer; forms heterotetrameric Gn-Gc spikes in the pre-fusion conformation. Homotrimer; forms homotrimer in the post-fusion conformation at acidic pH. Interacts (via C-terminus) with the nucleoprotein. Post-translationally, envelope polyprotein precursor is quickly cleaved in vivo just after synthesis, presumably by host signal peptidase.

The protein localises to the virion membrane. Its subcellular location is the host cell surface. It localises to the host Golgi apparatus membrane. It is found in the host endoplasmic reticulum membrane. The protein resides in the host mitochondrion. Functionally, forms homotetramers with glycoprotein C at the surface of the virion. Attaches the virion to host cell receptors including integrin ITGAV/ITGB3. This attachment induces virion internalization predominantly through clathrin-dependent endocytosis. May also bind to host C1QBP for virus entry into the host cell. Mediates the assembly and budding of infectious virus particles through its interaction with the nucleocapsid protein and the viral genome. May dysregulate normal immune and endothelial cell responses through an ITAM motif. Translocates to mitochondria, binds to host TUFM and recruits MAP1LC3B. These interactions induce mitochondrial autophagy and therefore destruction of host MAVS leading to inhibition of type I interferon (IFN) responses. Concomitant breakdown of glycoprotein N is apparently prevented by the nucleoprotein that may inhibit Gn-stimulated autophagosome-lysosome fusion. Interacts with the viral genomic RNA. Forms homotetramers with glycoprotein N at the surface of the virion. Attaches the virion to host cell receptors including integrin ITGAV/ITGB3. This attachment induces virion internalization predominantly through clathrin-dependent endocytosis. May also bind to host C1QBP for virus entry into the host cell. Class II fusion protein that promotes fusion of viral membrane with host endosomal membrane after endocytosis of the virion. This Apodemus agrarius (Eurasian field mouse) protein is Envelopment polyprotein (GP).